The sequence spans 1202 residues: Inner capsid protein VP3 (1202 aa).

Disordered regions lie at residues 1–45 (MRPI…SGKI) and 73–99 (YTSK…PRVT). Basic and acidic residues predominate over residues 10–21 (NQERTTTKHQET). The span at 27–45 (NEQTTSDQRFTRSSNSGKI) shows a compositional bias: polar residues.

Belongs to the turreted BTV-fold inner capsid family. Homodecamer; each decamer is made up of two conformers of VP2, called VP2A and VP2B. 12 homodecamers assemble to form an icosahedral capsid.

It is found in the virion. Functionally, inner capsid protein that self-assembles to form an icosahedral capsid with a T=2 symmetry, which consists of 120 copies of VP2, with channels at each of its five-fold vertices. This capsid constitutes the innermost concentric layer of the viral mature particle. This Aedes pseudoscutellaris reovirus (isolate France) (ApRV) protein is Inner capsid protein VP3 (S3).